Consider the following 232-residue polypeptide: Cytidylate kinase (232 aa).

The disordered stretch occupies residues 1–21 (MSEDTPLVVAMDGPSGTGKSS). 13–21 (GPSGTGKSS) is an ATP binding site.

The protein belongs to the cytidylate kinase family. Type 1 subfamily.

It is found in the cytoplasm. It catalyses the reaction CMP + ATP = CDP + ADP. It carries out the reaction dCMP + ATP = dCDP + ADP. This Nocardia farcinica (strain IFM 10152) protein is Cytidylate kinase.